Here is a 1496-residue protein sequence, read N- to C-terminus: MALSKGLRLLARLDPTGPSSVLLEARGRGDCLLFEAGAVATLAPEEKEVIKGLYGKPTDAYGCLGELSLKSGGVPLSFLVLVTGCTSVGRIPDAEIYKITGTEFYPLQEEAKEEDRLPALKKILSSGVFYFAWPNDGACFDLTIRAQKQGDDCSEWGTSFFWNQLLHVPLRQHQVNCHDWLLKVICGVVTIRTVYASHKQAKACLISRISCERAGARFLTRGVNDDGHVSNFVETEQAIYMDDGVSSFVQIRGSVPLFWEQPGLQVGSHHLRLHRGLEANAPAFERHMVLLKEQYGQQVVVNLLGSRGGEEVLNRAFKKLLWASCHAGDTPMINFDFHQFAKGRKLEKLENLLRPQLKLHWDDFGVFAKGENVSPRFQKGTLRMNCLDCLDRTNTVQCFIALEVLHLQLESLGLNSKPITDRFVESFKAMWSLNGHGLSKVFTGSRALEGKAKVGKLKDGARSMSRTIQSNFFDGVKQEAIKLLLVGDVYNEESTDKGRMLLDNTALLGLGSNKQNSLSGMLDGKATPRILKAMTERQSEFTNFKRIQIAMGTWNVNGGKQFRSNLLGTTELTDWLLDAPQLSGAVDSQDDGGPADIFAVGFEEMVELSAGNIVNASTTNRKMWGEQLQKAISRSHRYILLTSAQLVGVCLYIFVRPYHVPFIRDVAIDTVKTGMGGKAGNKGAVGIRFQFHSTSFCFICSHLTAGQSQVKERNEDYREITHKLSFPSGRNIFSHDYVFWCGDFNYRIDLTYEEVFYFVKRQDWKKLMEFDQLQLQKSSGKIFKDFHEGTINFGPTYKYDVGSAAYDTSDKCRTPAWTDRVLWWRKKHPYDKTAGELNLLDSDLDGDANIRHTWSPGTLKYYGRAELQASDHRPVLAIVEVEVQEVDVGARERVFQEVSSVQGPLDATVIVNLQSPTLEERNEFPEDLRTELMQTLGNYGTIILVRINQGQMLVTFADSHSALSVLDVDGMKVKGRAVKIRPKTKDWLEGLREELIRKRDSMAPVSPTANSCLLEENFDFTSLDYESEGDVLEDDEDYLADEFGQPVVSDSELGGDDSSDTMSASTPASKSPALAKKKQHPTYKDDADLMTLKLELEVAGNFRHRSPSRSLSVPNRPRPPHPPQRPPPPTGLMVKKSASDASISSGTHGQYSILQTAKLLPGAPQQPPKARTGISKPYNVKQIKTTNAQEAEAAIRCLLEAGGGVPESAPGATPLRNQGSSKPEASLGPPVLPRRPVPRVPTMKKPTLRRTGKPMLPEEQCEQQPVHFTMASQEMNLETPPPITAPIPPVPKPRTFQPGRGVERRPSGGKPEPDDAPPVTGAVELSSPEAPEAPSLAPKVPPRRKKSAPAAFHLQVLQSNSQLLQGLTCSSSSPSPPKPDTPLLYPQMALGTSSAISPETDGPRVTEPEAASFHGDYPDPFWSLLHHPKLLNNNTWLSKSSEPLDLGSRTPERTHTDSAQVNASVVERGLPPDHGGKDFSHWMAASNKDKRTTLGV.

Residues 120 to 444 (LKKILSSGVF…GHGLSKVFTG (325 aa)) form the SAC domain. Residues 906 to 985 (DATVIVNLQS…RAVKIRPKTK (80 aa)) form the RRM domain. 6 disordered regions span residues 1047-1083 (VVSDSELGGDDSSDTMSASTPASKSPALAKKKQHPTY), 1100-1149 (GNFR…GTHG), 1205-1357 (VPES…LQVL), 1393-1413 (SSAISPETDGPRVTEPEAASF), 1442-1461 (EPLDLGSRTPERTHTDSAQV), and 1468-1496 (RGLPPDHGGKDFSHWMAASNKDKRTTLGV). A compositionally biased stretch (low complexity) spans 1063-1074 (SASTPASKSPAL). The span at 1116–1130 (RPRPPHPPQRPPPPT) shows a compositional bias: pro residues. A Phosphoserine modification is found at Ser1139. Residues 1139–1149 (SDASISSGTHG) show a composition bias toward polar residues. Pro residues-rich tracts occupy residues 1230–1239 (PVLPRRPVPR) and 1279–1292 (TPPPITAPIPPVPK). A compositionally biased stretch (low complexity) spans 1324 to 1338 (ELSSPEAPEAPSLAP). Composition is skewed to basic and acidic residues over residues 1470–1480 (LPPDHGGKDFS) and 1487–1496 (NKDKRTTLGV).

This sequence belongs to the synaptojanin family. It in the central section; belongs to the inositol 1,4,5-trisphosphate 5-phosphatase family. As to quaternary structure, binds to GRB2. Isoform 2A binds to SYNJ2BP/OMP25. As to expression, widely expressed. Isoforms 2B1 and 2B2 are concentrated at nerve terminals in brain and at spermatid manchette in testis.

The protein localises to the cytoplasm. The protein resides in the cell membrane. It localises to the presynapse. It is found in the cytoskeleton. Its subcellular location is the membrane raft. The protein localises to the mitochondrion. It carries out the reaction a 1,2-diacyl-sn-glycero-3-phospho-(1D-myo-inositol-4,5-bisphosphate) + H2O = a 1,2-diacyl-sn-glycero-3-phospho-(1D-myo-inositol 4-phosphate) + phosphate. Inositol 5-phosphatase which may be involved in distinct membrane trafficking and signal transduction pathways. May mediate the inhibitory effect of Rac1 on endocytosis. The sequence is that of Synaptojanin-2 (Synj2) from Rattus norvegicus (Rat).